The primary structure comprises 189 residues: Ras-like protein 1 (189 aa).

Glycine 10–serine 17 lines the GTP pocket. An Effector region motif is present at residues tyrosine 32–tyrosine 40. Residues aspartate 57–glutamine 61 and asparagine 116–aspartate 119 each bind GTP. Cysteine 186 bears the Cysteine methyl ester mark. A lipid anchor (S-geranylgeranyl cysteine) is attached at cysteine 186. Residues lysine 187–leucine 189 constitute a propeptide, removed in mature form.

It belongs to the small GTPase superfamily. Ras family.

The protein resides in the cell membrane. It carries out the reaction GTP + H2O = GDP + phosphate + H(+). Alternates between an inactive form bound to GDP and an active form bound to GTP. Activated by a guanine nucleotide-exchange factor (GEF) and inactivated by a GTPase-activating protein (GAP). Ras proteins bind GDP/GTP and possess intrinsic GTPase activity. Plays a role in eye development by regulating cell growth, survival of postmitotic ommatidial cells and differentiation of photoreceptor cells. During larval development, mediates Ptth/tor signaling leading to the production of ecdysone, a hormone required for the initiation of metamorphosis. In Drosophila grimshawi (Hawaiian fruit fly), this protein is Ras-like protein 1.